A 193-amino-acid chain; its full sequence is dCTP deaminase, dUMP-forming (193 aa).

DCTP is bound by residues 101 to 106 (KSSLGR), Asp-119, 127 to 129 (TLE), Gln-148, Tyr-162, and Gln-174. Glu-129 (proton donor/acceptor) is an active-site residue. Positions 162–184 (YGSKGTGSHYQGQRGPTPSRSYE) are disordered. Polar residues predominate over residues 167 to 183 (TGSHYQGQRGPTPSRSY).

Belongs to the dCTP deaminase family. In terms of assembly, homotrimer.

It carries out the reaction dCTP + 2 H2O = dUMP + NH4(+) + diphosphate. It functions in the pathway pyrimidine metabolism; dUMP biosynthesis; dUMP from dCTP: step 1/1. Its function is as follows. Bifunctional enzyme that catalyzes both the deamination of dCTP to dUTP and the hydrolysis of dUTP to dUMP without releasing the toxic dUTP intermediate. This is dCTP deaminase, dUMP-forming from Bifidobacterium longum (strain DJO10A).